The sequence spans 647 residues: Threonine--tRNA ligase (647 aa).

A TGS domain is found at 1–61; it reads MINITFPDGA…TEDGSIEIVT (61 aa). A catalytic region spans residues 242–540; the sequence is DHRKLGKELD…LIENYKGAFP (299 aa). Residues Cys-336, His-387, and His-517 each coordinate Zn(2+).

The protein belongs to the class-II aminoacyl-tRNA synthetase family. Homodimer. Zn(2+) is required as a cofactor.

It is found in the cytoplasm. The enzyme catalyses tRNA(Thr) + L-threonine + ATP = L-threonyl-tRNA(Thr) + AMP + diphosphate + H(+). Catalyzes the attachment of threonine to tRNA(Thr) in a two-step reaction: L-threonine is first activated by ATP to form Thr-AMP and then transferred to the acceptor end of tRNA(Thr). Also edits incorrectly charged L-seryl-tRNA(Thr). The polypeptide is Threonine--tRNA ligase (Streptococcus pneumoniae (strain JJA)).